Consider the following 368-residue polypeptide: DNA replication and repair protein RecF (368 aa).

An ATP-binding site is contributed by 30–37 (GNNAQGKT).

This sequence belongs to the RecF family.

The protein localises to the cytoplasm. The RecF protein is involved in DNA metabolism; it is required for DNA replication and normal SOS inducibility. RecF binds preferentially to single-stranded, linear DNA. It also seems to bind ATP. This chain is DNA replication and repair protein RecF, found in Streptococcus pyogenes serotype M6 (strain ATCC BAA-946 / MGAS10394).